The following is a 74-amino-acid chain: Protein krueppel (74 aa).

4 consecutive C2H2-type zinc fingers follow at residues 1 to 4, 10 to 32, 38 to 60, and 66 to 74; these read ERTH, FECQECHKRFTRDHHLKTHMRLH, YRCEHCDRQFVQVANLRRHLRVH, and YGCEHCSMK.

The protein belongs to the krueppel C2H2-type zinc-finger protein family.

It is found in the nucleus. Its function is as follows. Krueppel is a gap class segmentation protein. The sequence is that of Protein krueppel (Kr) from Tribolium castaneum (Red flour beetle).